The chain runs to 69 residues: Defensin-like protein 166 (69 aa).

The first 15 residues, 1 to 15 (MIIVIIFLVIYFNNQ), serve as a signal peptide directing secretion. Cystine bridges form between Cys-19–Cys-68, Cys-24–Cys-44, Cys-29–Cys-62, and Cys-33–Cys-64.

This sequence belongs to the DEFL family.

The protein resides in the secreted. This chain is Defensin-like protein 166, found in Arabidopsis thaliana (Mouse-ear cress).